The chain runs to 146 residues: MAGVNQACIFCEIVRNPTTTRLLHTDEKVIAFQDIKPAAQRHYLVIPKEHIPTVNDLQRRDEDYSLVRHMLSVGQQLLQKDAPQSIHRFGFHQPPFNSVDHLHLHCFALPYVPRWKAIKYKSLGPLGGFIEAETLLEKIRPLLSKV.

In terms of domain architecture, HIT spans 9-120 (IFCEIVRNPT…YVPRWKAIKY (112 aa)). Positions 101 to 105 (HLHLH) match the Histidine triad motif motif. The Tele-AMP-histidine intermediate role is filled by His-105.

Homodimer.

It is found in the peroxisome. It carries out the reaction sulfate + ADP + H(+) = adenosine 5'-phosphosulfate + phosphate. The enzyme catalyses adenosine 5'-phosphosulfate + H2O = sulfate + AMP + 2 H(+). The adenosine 5'-phosphosulfate phosphorylase activity is enhanced at low pH. Its function is as follows. Possesses adenylylsulfatase activity in vitro, releasing AMP and sulfate from adenylyl sulfate. Also possesses adenosine 5'-phosphosulfate (APS) phosphorylase activity in vitro. Catalyzes the phosphorolysis of APS, leading to ADP and sulfate. In Arabidopsis thaliana (Mouse-ear cress), this protein is Bifunctional adenosine 5'-phosphosulfate phosphorylase/adenylylsulfatase HINT4.